The sequence spans 358 residues: MGHFSSMFNGIARSFSIKKAKNINSSKSYAKEATDEMAREAKKKELILRSSGCINADGSNNLASVFSRRGEKGVNQDCAIVWEGYGCQEDMIFCGIFDGHGPWGHFVSKQVRNSMPISLLCNWKETLSQTTIAEPDKELQRFAIWKYSFLKTCEAVDLELEHHRKIDSFNSGTTALTIVRQGDVIYIANVGDSRAVLATVSDEGSLVAVQLTVDFKPNLPQEEERIIGCNGRVFCLQDEPGVHRVWQPVDESPGLAMSRAFGDYCIKDYGLVSVPEVTQRHISIRDQFIILATDGVWDVISNQEAIDIVSSTAERAKAAKRLVQQAVRAWNRKRRGIAMDDISAVCLFFHSSSSSPSL.

The region spanning 62 to 349 (LASVFSRRGE…DDISAVCLFF (288 aa)) is the PPM-type phosphatase domain. Mn(2+) is bound by residues aspartate 98, glycine 99, aspartate 294, and aspartate 340.

This sequence belongs to the PP2C family. It depends on Mg(2+) as a cofactor. Mn(2+) is required as a cofactor.

It catalyses the reaction O-phospho-L-seryl-[protein] + H2O = L-seryl-[protein] + phosphate. The enzyme catalyses O-phospho-L-threonyl-[protein] + H2O = L-threonyl-[protein] + phosphate. This Arabidopsis thaliana (Mouse-ear cress) protein is Probable protein phosphatase 2C 34.